Reading from the N-terminus, the 394-residue chain is Flavohemoprotein (394 aa).

A Globin domain is found at 1–138; the sequence is MLTQEHINII…LAQVFIDREG (138 aa). His85 is a binding site for heme b. Catalysis depends on charge relay system residues Tyr95 and Glu137. The tract at residues 149–394 is reductase; the sequence is GGWRDGRTFV…VFGPHAQLAA (246 aa). In terms of domain architecture, FAD-binding FR-type spans 152–262; that stretch reads RDGRTFVVRE…YAPAGDFFYV (111 aa). FAD is bound by residues Tyr190 and 206-209; that span reads RQYS. An NADP(+)-binding site is contributed by 274-279; it reads GVGATP. 385-388 provides a ligand contact to FAD; that stretch reads VFGP.

Belongs to the globin family. Two-domain flavohemoproteins subfamily. It in the C-terminal section; belongs to the flavoprotein pyridine nucleotide cytochrome reductase family. It depends on heme b as a cofactor. The cofactor is FAD.

It carries out the reaction 2 nitric oxide + NADPH + 2 O2 = 2 nitrate + NADP(+) + H(+). It catalyses the reaction 2 nitric oxide + NADH + 2 O2 = 2 nitrate + NAD(+) + H(+). Its function is as follows. Is involved in NO detoxification in an aerobic process, termed nitric oxide dioxygenase (NOD) reaction that utilizes O(2) and NAD(P)H to convert NO to nitrate, which protects the bacterium from various noxious nitrogen compounds. Therefore, plays a central role in the inducible response to nitrosative stress. The sequence is that of Flavohemoprotein (hmp) from Vibrio cholerae serotype O1 (strain ATCC 39315 / El Tor Inaba N16961).